The sequence spans 70 residues: DNA-directed RNA polymerase subunit epsilon (70 aa).

The protein belongs to the RNA polymerase subunit epsilon family. As to quaternary structure, RNAP is composed of a core of 2 alpha, a beta and a beta' subunit. The core is associated with a delta subunit, and at least one of epsilon or omega. When a sigma factor is associated with the core the holoenzyme is formed, which can initiate transcription.

The catalysed reaction is RNA(n) + a ribonucleoside 5'-triphosphate = RNA(n+1) + diphosphate. In terms of biological role, a non-essential component of RNA polymerase (RNAP). This Bacillus cytotoxicus (strain DSM 22905 / CIP 110041 / 391-98 / NVH 391-98) protein is DNA-directed RNA polymerase subunit epsilon.